Here is an 86-residue protein sequence, read N- to C-terminus: Exodeoxyribonuclease 7 small subunit (86 aa).

A disordered region spans residues 64–86 (SNPETVQDKTDTDEPDSNEFSLT).

Belongs to the XseB family. As to quaternary structure, heterooligomer composed of large and small subunits.

Its subcellular location is the cytoplasm. The enzyme catalyses Exonucleolytic cleavage in either 5'- to 3'- or 3'- to 5'-direction to yield nucleoside 5'-phosphates.. Its function is as follows. Bidirectionally degrades single-stranded DNA into large acid-insoluble oligonucleotides, which are then degraded further into small acid-soluble oligonucleotides. The chain is Exodeoxyribonuclease 7 small subunit from Akkermansia muciniphila (strain ATCC BAA-835 / DSM 22959 / JCM 33894 / BCRC 81048 / CCUG 64013 / CIP 107961 / Muc).